Here is a 168-residue protein sequence, read N- to C-terminus: Peptidyl-prolyl cis-trans isomerase-like 3 (168 aa).

The PPIase cyclophilin-type domain maps to 1–156; the sequence is MSVTLHTNVG…SEIRMTGVTV (156 aa).

The protein belongs to the cyclophilin-type PPIase family. PPIL3 subfamily.

It carries out the reaction [protein]-peptidylproline (omega=180) = [protein]-peptidylproline (omega=0). PPIases accelerate the folding of proteins. It catalyzes the cis-trans isomerization of proline imidic peptide bonds in oligopeptides. The protein is Peptidyl-prolyl cis-trans isomerase-like 3 (CYP10) of Mycosarcoma maydis (Corn smut fungus).